The following is a 440-amino-acid chain: Beta-1,3-galactosyl-O-glycosyl-glycoprotein beta-1,6-N-acetylglucosaminyltransferase (440 aa).

The Cytoplasmic segment spans residues 1–9 (MKMAGWKKK). A helical; Signal-anchor for type II membrane protein membrane pass occupies residues 10 to 30 (LCPGHHLWALGCYMLLAVVSL). The Lumenal segment spans residues 31 to 440 (RLSLRFKCDV…RHKAIYGTEL (410 aa)). Residues N72 and N108 are each glycosylated (N-linked (GlcNAc...) asparagine; by host). 4 disulfide bridges follow: C73-C230, C164-C384, C185-C212, and C393-C425.

It belongs to the glycosyltransferase 14 family.

The protein localises to the host Golgi apparatus membrane. The catalysed reaction is a 3-O-[beta-D-galactosyl-(1-&gt;3)-N-acetyl-alpha-D-galactosaminyl]-L-seryl-[protein] + UDP-N-acetyl-alpha-D-glucosamine = 3-O-{beta-D-galactosyl-(1-&gt;3)-[N-acetyl-beta-D-glucosaminyl-(1-&gt;6)]-N-acetyl-alpha-D-galactosaminyl}-L-seryl-[protein] + UDP + H(+). It carries out the reaction a 3-O-[beta-D-galactosyl-(1-&gt;3)-N-acetyl-alpha-D-galactosaminyl]-L-threonyl-[protein] + UDP-N-acetyl-alpha-D-glucosamine = a 3-O-{beta-D-galactosyl-(1-&gt;3)-[N-acetyl-beta-D-glucosaminyl-(1-&gt;6)]-N-acetyl-alpha-D-galactosaminyl}-L-threonyl-[protein] + UDP + H(+). The enzyme catalyses a beta-D-Gal-(1-&gt;4)-beta-D-GlcNAc-(1-&gt;3)-beta-D-Gal-(1-&gt;4)-beta-D-GlcNAc derivative + UDP-N-acetyl-alpha-D-glucosamine = a beta-D-Gal-(1-&gt;4)-beta-D-GlcNAc-(1-&gt;3)-[beta-D-GlcNAc-(1-&gt;6)]-beta-D-Gal-(1-&gt;4)-N-acetyl-beta-D-glucosaminyl derivative + UDP + H(+). It catalyses the reaction 3-O-[N-acetyl-beta-D-glucosaminyl-(1-&gt;3)-N-acetyl-alpha-D-galactosaminyl]-L-seryl-[protein] + UDP-N-acetyl-alpha-D-glucosamine = 3-O-[N-acetyl-beta-D-glucosaminyl-(1-&gt;3)-[N-acetyl-beta-D-glucosaminyl-(1-&gt;6)]-N-acetyl-alpha-D-galactosaminyl]-L-seryl-[protein] + UDP + H(+). The catalysed reaction is a 3-O-[N-acetyl-beta-D-glucosaminyl-(1-&gt;3)-N-acetyl-alpha-D-galactosaminyl]-L-threonyl-[protein] + UDP-N-acetyl-alpha-D-glucosamine = 3-O-[N-acetyl-beta-D-glucosaminyl-(1-&gt;3)-[N-acetyl-beta-D-glucosaminyl-(1-&gt;6)]-N-acetyl-alpha-D-galactosaminyl]-L-threonyl-[protein] + UDP + H(+). It participates in protein modification; protein glycosylation. Its function is as follows. Non-essential glycosyltransferase that can synthesize all known mucin beta 6 N-acetylglucosaminides. Mediates core 2 and core 4 O-glycan branching, 2 important steps in mucin-type biosynthesis. Has also I-branching enzyme activity by converting linear into branched poly-N-acetyllactosaminoglycans. Contributes to the post-translational modifications of structural proteins. This chain is Beta-1,3-galactosyl-O-glycosyl-glycoprotein beta-1,6-N-acetylglucosaminyltransferase (Bo17), found in Bovine herpesvirus 4 (strain LVR140) (BoHV-4).